Consider the following 390-residue polypeptide: Oxygen-dependent coproporphyrinogen-III oxidase (390 aa).

An important for dimerization region spans residues 131 to 140 (VLQDGDVFEK). Residue serine 181 coordinates substrate. Histidine 195 (proton donor) is an active-site residue. Substrate is bound by residues 197–199 (NYR) and 348–353 (GARYES). The important for dimerization stretch occupies residues 329–365 (YVEFNLIYDRGTKFGLYTPGARYESILMSLPLHARWE).

The protein belongs to the aerobic coproporphyrinogen-III oxidase family. In terms of assembly, homodimer.

It carries out the reaction coproporphyrinogen III + O2 + 2 H(+) = protoporphyrinogen IX + 2 CO2 + 2 H2O. Its pathway is porphyrin-containing compound metabolism; protoporphyrin-IX biosynthesis; protoporphyrinogen-IX from coproporphyrinogen-III (O2 route): step 1/1. Functionally, involved in the heme biosynthesis. Catalyzes the aerobic oxidative decarboxylation of propionate groups of rings A and B of coproporphyrinogen-III to yield the vinyl groups in protoporphyrinogen-IX. The chain is Oxygen-dependent coproporphyrinogen-III oxidase (Coprox) from Drosophila melanogaster (Fruit fly).